Reading from the N-terminus, the 470-residue chain is Siroheme synthase 2 (470 aa).

The precorrin-2 dehydrogenase /sirohydrochlorin ferrochelatase stretch occupies residues 1 to 202 (MDYLPMFAKL…EDWQGAEQWL (202 aa)). NAD(+) contacts are provided by residues 22-23 (EV) and 43-44 (PE). Residue Ser-126 is modified to Phosphoserine. The interval 214–470 (GEVVLVGAGP…TCDLKLVSLA (257 aa)) is uroporphyrinogen-III C-methyltransferase. Residue Pro-223 coordinates S-adenosyl-L-methionine. Catalysis depends on Asp-246, which acts as the Proton acceptor. Residue Lys-268 is the Proton donor of the active site. S-adenosyl-L-methionine contacts are provided by residues 299-301 (GGD), 329-330 (TA), Met-381, and Gly-410.

In the N-terminal section; belongs to the precorrin-2 dehydrogenase / sirohydrochlorin ferrochelatase family. This sequence in the C-terminal section; belongs to the precorrin methyltransferase family.

The catalysed reaction is uroporphyrinogen III + 2 S-adenosyl-L-methionine = precorrin-2 + 2 S-adenosyl-L-homocysteine + H(+). It carries out the reaction precorrin-2 + NAD(+) = sirohydrochlorin + NADH + 2 H(+). It catalyses the reaction siroheme + 2 H(+) = sirohydrochlorin + Fe(2+). Its pathway is cofactor biosynthesis; adenosylcobalamin biosynthesis; precorrin-2 from uroporphyrinogen III: step 1/1. It participates in cofactor biosynthesis; adenosylcobalamin biosynthesis; sirohydrochlorin from precorrin-2: step 1/1. It functions in the pathway porphyrin-containing compound metabolism; siroheme biosynthesis; precorrin-2 from uroporphyrinogen III: step 1/1. The protein operates within porphyrin-containing compound metabolism; siroheme biosynthesis; siroheme from sirohydrochlorin: step 1/1. Its pathway is porphyrin-containing compound metabolism; siroheme biosynthesis; sirohydrochlorin from precorrin-2: step 1/1. Functionally, multifunctional enzyme that catalyzes the SAM-dependent methylations of uroporphyrinogen III at position C-2 and C-7 to form precorrin-2 via precorrin-1. Then it catalyzes the NAD-dependent ring dehydrogenation of precorrin-2 to yield sirohydrochlorin. Finally, it catalyzes the ferrochelation of sirohydrochlorin to yield siroheme. The sequence is that of Siroheme synthase 2 from Aeromonas hydrophila subsp. hydrophila (strain ATCC 7966 / DSM 30187 / BCRC 13018 / CCUG 14551 / JCM 1027 / KCTC 2358 / NCIMB 9240 / NCTC 8049).